Consider the following 709-residue polypeptide: Phosphoribosylformylglycinamidine synthase subunit PurL (709 aa).

His-36 is a catalytic residue. Residues Tyr-39 and Lys-80 each contribute to the ATP site. Mg(2+) is bound at residue Glu-82. Substrate-binding positions include 83 to 86 and Arg-105; that span reads SHNH. The active-site Proton acceptor is His-84. Residue Asp-106 participates in Mg(2+) binding. A substrate-binding site is contributed by Gln-226. Asp-252 serves as a coordination point for Mg(2+). Residue 294-296 coordinates substrate; it reads ETQ. Asp-470 and Gly-507 together coordinate ATP. Residue Ser-510 participates in substrate binding.

Belongs to the FGAMS family. Monomer. Part of the FGAM synthase complex composed of 1 PurL, 1 PurQ and 2 PurS subunits.

The protein resides in the cytoplasm. The catalysed reaction is N(2)-formyl-N(1)-(5-phospho-beta-D-ribosyl)glycinamide + L-glutamine + ATP + H2O = 2-formamido-N(1)-(5-O-phospho-beta-D-ribosyl)acetamidine + L-glutamate + ADP + phosphate + H(+). Its pathway is purine metabolism; IMP biosynthesis via de novo pathway; 5-amino-1-(5-phospho-D-ribosyl)imidazole from N(2)-formyl-N(1)-(5-phospho-D-ribosyl)glycinamide: step 1/2. Its function is as follows. Part of the phosphoribosylformylglycinamidine synthase complex involved in the purines biosynthetic pathway. Catalyzes the ATP-dependent conversion of formylglycinamide ribonucleotide (FGAR) and glutamine to yield formylglycinamidine ribonucleotide (FGAM) and glutamate. The FGAM synthase complex is composed of three subunits. PurQ produces an ammonia molecule by converting glutamine to glutamate. PurL transfers the ammonia molecule to FGAR to form FGAM in an ATP-dependent manner. PurS interacts with PurQ and PurL and is thought to assist in the transfer of the ammonia molecule from PurQ to PurL. This chain is Phosphoribosylformylglycinamidine synthase subunit PurL, found in Saccharolobus islandicus (strain M.16.4 / Kamchatka #3) (Sulfolobus islandicus).